Here is a 553-residue protein sequence, read N- to C-terminus: Non-SCF-type F-box protein ROY1 (553 aa).

Positions 3–49 (FQDQDIFIVFSHASLFLNQNDLLSLSLTSKKMHDMIAIPRLYSNIHI) constitute an F-box domain.

As to quaternary structure, interacts with SKP1 and YPT32; SKP1 is required for the interaction with YPT32.

It is found in the cytoplasm. The protein resides in the nucleus. It localises to the cytoplasmic vesicle membrane. In terms of biological role, non-SCF-type F-box protein involved in the endocytic with the vacuolar sorting pathway. Acts as a repressor of YPT52 by inhibiting the formation of active, GTP-bound, YPT52. Involved in the defense mechanism against methylmercury toxicity. The chain is Non-SCF-type F-box protein ROY1 (ROY1) from Saccharomyces cerevisiae (strain ATCC 204508 / S288c) (Baker's yeast).